Consider the following 210-residue polypeptide: Protein-L-isoaspartate O-methyltransferase (210 aa).

Ser-54 is a catalytic residue.

Belongs to the methyltransferase superfamily. L-isoaspartyl/D-aspartyl protein methyltransferase family.

The protein localises to the cytoplasm. The catalysed reaction is [protein]-L-isoaspartate + S-adenosyl-L-methionine = [protein]-L-isoaspartate alpha-methyl ester + S-adenosyl-L-homocysteine. Functionally, catalyzes the methyl esterification of L-isoaspartyl residues in peptides and proteins that result from spontaneous decomposition of normal L-aspartyl and L-asparaginyl residues. It plays a role in the repair and/or degradation of damaged proteins. The chain is Protein-L-isoaspartate O-methyltransferase from Methanothrix thermoacetophila (strain DSM 6194 / JCM 14653 / NBRC 101360 / PT) (Methanosaeta thermophila).